The chain runs to 303 residues: Coenzyme PQQ synthesis protein B (303 aa).

The protein belongs to the PqqB family.

The protein operates within cofactor biosynthesis; pyrroloquinoline quinone biosynthesis. In terms of biological role, may be involved in the transport of PQQ or its precursor to the periplasm. In Pseudomonas syringae pv. syringae (strain B728a), this protein is Coenzyme PQQ synthesis protein B.